Reading from the N-terminus, the 179-residue chain is Molybdopterin synthase catalytic subunit (179 aa).

Residues 1 to 10 (MTTSEDQTTP) are compositionally biased toward polar residues. The disordered stretch occupies residues 1–21 (MTTSEDQTTPAHLDPKTYPRH). Substrate contacts are provided by residues 127 to 128 (HR), Lys-143, and 150 to 152 (KRE).

Belongs to the MoaE family. MOCS2B subfamily. Heterotetramer; composed of 2 small (MOCS2A) and 2 large (MOCS2B) subunits.

It is found in the cytoplasm. The enzyme catalyses 2 [molybdopterin-synthase sulfur-carrier protein]-C-terminal-Gly-aminoethanethioate + cyclic pyranopterin phosphate + H2O = molybdopterin + 2 [molybdopterin-synthase sulfur-carrier protein]-C-terminal Gly-Gly + 2 H(+). It participates in cofactor biosynthesis; molybdopterin biosynthesis. In terms of biological role, catalytic subunit of the molybdopterin synthase complex, a complex that catalyzes the conversion of precursor Z into molybdopterin. Acts by mediating the incorporation of 2 sulfur atoms from thiocarboxylated MOCS2A into precursor Z to generate a dithiolene group. In Aspergillus oryzae (strain ATCC 42149 / RIB 40) (Yellow koji mold), this protein is Molybdopterin synthase catalytic subunit.